The sequence spans 335 residues: Adenosine deaminase (335 aa).

Zn(2+)-binding residues include His-12 and His-14. Substrate is bound by residues His-14 and Asp-16. His-197 provides a ligand contact to Zn(2+). The active-site Proton donor is the Glu-200. A Zn(2+)-binding site is contributed by Asp-278.

Belongs to the metallo-dependent hydrolases superfamily. Adenosine and AMP deaminases family. Adenosine deaminase subfamily. Zn(2+) is required as a cofactor.

It carries out the reaction adenosine + H2O + H(+) = inosine + NH4(+). The catalysed reaction is 2'-deoxyadenosine + H2O + H(+) = 2'-deoxyinosine + NH4(+). In terms of biological role, catalyzes the hydrolytic deamination of adenosine and 2-deoxyadenosine. This Clostridium botulinum (strain Kyoto / Type A2) protein is Adenosine deaminase.